The primary structure comprises 558 residues: MDVDLPPPGPLTSGGLRVTALGGINEIGRNMTVFEHLGRLLIIDCGVLFPGHDEPGVDLILPDMRHVEDRLDDIEALVLTHGHEDHIGAIPFLLKLRPDIPVVGSKFTLALVAEKCREYRITPVFVEVREGQSTRHGVFECEYFAVNHSTPDALAIAVYTGAGTILHTGDIKFDQLPPDGRPTDLPGMSRLGDTGVDLLLCDSTNAEIPGVGPSESEVGPTLHRLIRGADGRVIVACFASNVDRVQQIIDAAVALGRRVSFVGRSMVRNMRVARQLGFLRVADSDLIDIAAAETMAPDQVVLITTGTQGEPMSALSRMSRGEHRSITLTAGDLIVLSSSLIPGNEEAVFGVIDALSKIGARVVTNAQARVHVSGHAYAGELLFLYNGVRPRNVMPVHGTWRMLRANAKLAASTGVPQESILLAENGVSVDLVAGKASISGAVPVGKMFVDGLIAGDVGDITLGERLILSSGFVAVTVVVRRGTGQPLAAPHLHSRGFSEDPKALEPAVRKVEAELESLVAANVTDPIRIAQGVRRTVGKWVGETYRRQPMIVPTVIEV.

The Zn(2+) site is built by His-81, His-83, Asp-85, His-86, His-148, and Asp-170. A substrate-binding site is contributed by 371–375; the sequence is HVSGH. His-397 contacts Zn(2+).

It belongs to the metallo-beta-lactamase superfamily. RNA-metabolizing metallo-beta-lactamase-like family. Bacterial RNase J subfamily. In terms of assembly, homodimer, may be a subunit of the RNA degradosome. Requires Zn(2+) as cofactor.

It is found in the cytoplasm. Its function is as follows. An RNase that has 5'-3' exonuclease and possibly endoonuclease activity. Involved in maturation of rRNA and in some organisms also mRNA maturation and/or decay. The sequence is that of Ribonuclease J from Mycobacterium tuberculosis (strain CDC 1551 / Oshkosh).